Consider the following 294-residue polypeptide: Diaminopimelate epimerase (294 aa).

The substrate site is built by N15, Q47, and N67. C76 acts as the Proton donor in catalysis. Substrate is bound by residues 77–78, N163, N197, and 215–216; these read GN and ER. C224 serves as the catalytic Proton acceptor. Residue 225 to 226 participates in substrate binding; sequence GS.

It belongs to the diaminopimelate epimerase family. Homodimer.

The protein resides in the cytoplasm. It catalyses the reaction (2S,6S)-2,6-diaminopimelate = meso-2,6-diaminopimelate. It participates in amino-acid biosynthesis; L-lysine biosynthesis via DAP pathway; DL-2,6-diaminopimelate from LL-2,6-diaminopimelate: step 1/1. Its function is as follows. Catalyzes the stereoinversion of LL-2,6-diaminopimelate (L,L-DAP) to meso-diaminopimelate (meso-DAP), a precursor of L-lysine and an essential component of the bacterial peptidoglycan. This Mesorhizobium japonicum (strain LMG 29417 / CECT 9101 / MAFF 303099) (Mesorhizobium loti (strain MAFF 303099)) protein is Diaminopimelate epimerase.